Reading from the N-terminus, the 113-residue chain is Prefoldin subunit beta (113 aa).

The protein belongs to the prefoldin subunit beta family. Heterohexamer of two alpha and four beta subunits.

The protein resides in the cytoplasm. Molecular chaperone capable of stabilizing a range of proteins. Seems to fulfill an ATP-independent, HSP70-like function in archaeal de novo protein folding. The chain is Prefoldin subunit beta (pfdB) from Methanocaldococcus jannaschii (strain ATCC 43067 / DSM 2661 / JAL-1 / JCM 10045 / NBRC 100440) (Methanococcus jannaschii).